Here is a 438-residue protein sequence, read N- to C-terminus: chitinase-like effector (438 aa).

An N-terminal signal peptide occupies residues 1–23 (MFTPLSSVTALLALSSAFLGAQA). The GH18 domain occupies 54–437 (FIAKGYYTGW…DAIRSGAGLS (384 aa)). Trp416 is a binding site for chitin.

Belongs to the glycosyl hydrolase 18 family.

The protein resides in the secreted. In terms of biological role, catalytically impaired chitinase that binds efficiently to chitin, but not to chitosan, xylan, or cellulose. Despite the lack of chitinolytic activity, retains substrate binding specificity and acts as an effector to prevent chitin-triggered immunity by sequestering immunogenic chitin fragments. Does not function in the protection of fungal cell wall against plant hydrolytic enzymes. In Moniliophthora perniciosa (Witches'-broom disease fungus), this protein is chitinase-like effector.